The sequence spans 207 residues: Pyridoxine/pyridoxamine 5'-phosphate oxidase (207 aa).

FMN-binding positions include 53-58 (RMVLLK), 68-69 (YT), Lys75, and Gln97. Residue Lys58 coordinates substrate. Substrate is bound by residues Tyr115, Arg119, and Ser123. FMN is bound by residues 132–133 (QS) and Trp177. 183–185 (RLH) is a substrate binding site. Arg187 provides a ligand contact to FMN.

The protein belongs to the pyridoxamine 5'-phosphate oxidase family. Homodimer. The cofactor is FMN.

It carries out the reaction pyridoxamine 5'-phosphate + O2 + H2O = pyridoxal 5'-phosphate + H2O2 + NH4(+). It catalyses the reaction pyridoxine 5'-phosphate + O2 = pyridoxal 5'-phosphate + H2O2. The protein operates within cofactor metabolism; pyridoxal 5'-phosphate salvage; pyridoxal 5'-phosphate from pyridoxamine 5'-phosphate: step 1/1. It functions in the pathway cofactor metabolism; pyridoxal 5'-phosphate salvage; pyridoxal 5'-phosphate from pyridoxine 5'-phosphate: step 1/1. Catalyzes the oxidation of either pyridoxine 5'-phosphate (PNP) or pyridoxamine 5'-phosphate (PMP) into pyridoxal 5'-phosphate (PLP). The protein is Pyridoxine/pyridoxamine 5'-phosphate oxidase of Bartonella quintana (strain Toulouse) (Rochalimaea quintana).